The following is a 215-amino-acid chain: Transmembrane emp24 domain-containing protein 11 (215 aa).

A signal peptide spans 1–17; the sequence is MQIQTILLCFSFSFSAA. Topologically, residues 18-167 are lumenal; sequence FYFHAGEREE…ILKEQDYQRD (150 aa). In terms of domain architecture, GOLD spans 27 to 125; it reads EKCIIEDIPS…KLRIHLDIRV (99 aa). The N-linked (GlcNAc...) asparagine glycan is linked to asparagine 105. Residues 136–171 are a coiled coil; sequence QAKDKVNEVTFKLQHLIEQVEQILKEQDYQRDREEN. Residues 168–185 form a helical membrane-spanning segment; that stretch reads REENFRITSEDTNRNVLW. The Cytoplasmic portion of the chain corresponds to 186 to 215; it reads WAFAQILIFISVGIFQMKHLKDFFIAKKLV. Residues 208–209 carry the COPII vesicle coat-binding motif; the sequence is FF. The COPI vesicle coat-binding motif lies at 208–215; sequence FFIAKKLV.

Belongs to the EMP24/GP25L family.

The protein localises to the endoplasmic reticulum membrane. Its function is as follows. Part of a complex whose function is to bind Ca(2+) to the ER membrane and thereby regulate the retention of ER resident proteins. In Mus musculus (Mouse), this protein is Transmembrane emp24 domain-containing protein 11 (Tmed11).